The chain runs to 239 residues: Interleukin-27 subunit alpha (239 aa).

An N-terminal signal peptide occupies residues 1-28 (MGQMADDLGWRLSLLLLSLLLARAGVWG). Residue Asn-89 is glycosylated (N-linked (GlcNAc...) asparagine). The interval 167–186 (EEENEAGRELLPGAPGGPSK) is disordered.

This sequence belongs to the IL-6 superfamily. Heterodimer with EBI3; not disulfide-linked. This heterodimer is known as interleukin IL-27. O-glycosylated.

It is found in the secreted. In terms of biological role, associates with EBI3 to form the IL-27 interleukin, a heterodimeric cytokine which functions in innate immunity. Cytokine with pro- and anti-inflammatory properties, that can regulate T-helper cell development, suppress T-cell proliferation, stimulate cytotoxic T-cell activity, induce isotype switching in B-cells, and that has diverse effects on innate immune cells. Among its target cells are CD4 T-helper cells which can differentiate in type 1 effector cells (TH1), type 2 effector cells (TH2) and IL17 producing helper T-cells (TH17). It drives rapid clonal expansion of naive but not memory CD4 T-cells. It also strongly synergizes with IL-12 to trigger interferon-gamma/IFN-gamma production of naive CD4 T-cells, binds to the cytokine receptor WSX-1/TCCR which appears to be required but not sufficient for IL-27-mediated signal transduction. IL-27 potentiate the early phase of TH1 response and suppress TH2 and TH17 differentiation. It induces the differentiation of TH1 cells via two distinct pathways, p38 MAPK/TBX21- and ICAM1/ITGAL/ERK-dependent pathways. It also induces STAT1, STAT3, STAT4 and STAT5 phosphorylation and activates TBX21/T-Bet via STAT1 with resulting IL12RB2 up-regulation, an event crucial to TH1 cell commitment. It suppresses the expression of GATA3, the inhibitor TH1 cells development. In CD8 T-cells, it activates STATs as well as GZMB. IL-27 reveals to be a potent inhibitor of TH17 cell development and of IL-17 production. Indeed IL27 alone is also able to inhibit the production of IL17 by CD4 and CD8 T-cells. While IL-27 suppressed the development of pro-inflammatory Th17 cells via STAT1, it inhibits the development of anti-inflammatory inducible regulatory T-cells, iTreg, independently of STAT1. IL-27 also has an effect on cytokine production, it suppresses pro-inflammatory cytokine production such as IL2, IL4, IL5 and IL6 and activates suppressors of cytokine signaling such as SOCS1 and SOCS3. Apart from suppression of cytokine production, IL-27 also antagonizes the effects of some cytokines such as IL6 through direct effects on T-cells. Another important role of IL-27 is its antitumor activity as well as its antiangiogenic activity with activation of production of antiangiogenic chemokines such as IP-10/CXCL10 and MIG/CXCL9. In vein endothelial cells, it induces IRF1/interferon regulatory factor 1 and increase the expression of MHC class II transactivator/CIITA with resulting up-regulation of major histocompatibility complex class II. The protein is Interleukin-27 subunit alpha (IL27) of Sus scrofa (Pig).